Consider the following 64-residue polypeptide: Large ribosomal subunit protein bL35 (64 aa).

The tract at residues 1-21 (MPKMKTNRGAAKRFKVKKSGK) is disordered. Basic residues predominate over residues 10 to 21 (AAKRFKVKKSGK).

This sequence belongs to the bacterial ribosomal protein bL35 family.

The sequence is that of Large ribosomal subunit protein bL35 from Nautilia profundicola (strain ATCC BAA-1463 / DSM 18972 / AmH).